The sequence spans 478 residues: MNLSIQGELQLFAEELHQHLTPSFLENLARELTFVKRKRKFSGHDLAIICVWVSQRVASDSLVRLCSQLHAVTGTLMSPEGLNKRFNKKAVCFLKHIFSTLLKNKICETSLIPSSSITYFQRIRILDATIFQVPKHLANVYPGSGGCAQTAGIKIQLEYDLHSGQFLNFQVEPGKNNDKTFGTECLATLRPGDLCIRDLGYYSLDDLDQMDQRGVYYISRLKLNNMVYIKNEFPEYFRNGIVKKQSQYIKVDLEHIMNTLKPGQVHEITEAYIGKDKKLFTRVIIYRLTEKQLRERKKKQVYTESKKGITYSEKSKRLAGMNIYVTNTPLEWVPMEQIHDFYSLRWQIEIIFKTWKSLFQIHDWQNIKRERLECHIYGKLIAIFLCSSTMFKMRQLILQKKKRELSEYKAIGMIQDHLYILYQAIQQNTQEITRILIRLFHLLQKNGRKSHRYEKKTVFDILGVVYEYTGLIKQKKIA.

The protein belongs to the transposase 11 family.

In terms of biological role, involved in the transposition of the insertion sequence. This is Transposase for insertion sequence element IS231E from Bacillus thuringiensis subsp. finitimus.